The chain runs to 425 residues: Nuclear hormone receptor family member nhr-13 (425 aa).

Positions 5–83 form a DNA-binding region, nuclear receptor; the sequence is PNSCEVCSSS…IGMKPLLVKS (79 aa). NR C4-type zinc fingers lie at residues 11-30 and 46-71; these read CSSS…CKAC and CIDQ…LKKC. The interval 108 to 148 is disordered; that stretch reads VKENSEEIQNDDDPQESDAEMENESTPGPSSEPSENVSAEN. Positions 113–130 are enriched in acidic residues; that stretch reads EEIQNDDDPQESDAEMEN. The segment covering 131–142 has biased composition (low complexity); it reads ESTPGPSSEPSE. The region spanning 147–414 is the NR LBD domain; sequence ENQETVTKFL…KSMISLTSFW (268 aa).

This sequence belongs to the nuclear hormone receptor family. In terms of assembly, may interact with nuclear hormone receptor nhr-49.

It localises to the nucleus. Functionally, orphan nuclear receptor. Involved in regulating fatty acid desaturase genes, acting in concert with nuclear hormone receptor nhr-49. This chain is Nuclear hormone receptor family member nhr-13 (nhr-13), found in Caenorhabditis elegans.